Here is a 341-residue protein sequence, read N- to C-terminus: N-acetyl-gamma-glutamyl-phosphate reductase (341 aa).

Residue Cys163 is part of the active site.

Belongs to the NAGSA dehydrogenase family. Type 1 subfamily.

The protein resides in the cytoplasm. It catalyses the reaction N-acetyl-L-glutamate 5-semialdehyde + phosphate + NADP(+) = N-acetyl-L-glutamyl 5-phosphate + NADPH + H(+). It participates in amino-acid biosynthesis; L-arginine biosynthesis; N(2)-acetyl-L-ornithine from L-glutamate: step 3/4. Its function is as follows. Catalyzes the NADPH-dependent reduction of N-acetyl-5-glutamyl phosphate to yield N-acetyl-L-glutamate 5-semialdehyde. This chain is N-acetyl-gamma-glutamyl-phosphate reductase, found in Idiomarina loihiensis (strain ATCC BAA-735 / DSM 15497 / L2-TR).